We begin with the raw amino-acid sequence, 229 residues long: 5'-methylthioadenosine/S-adenosylhomocysteine nucleosidase (229 aa).

Residue Glu12 is the Proton acceptor of the active site. Substrate contacts are provided by residues Gly78, Ile152, and 173–174; that span reads ME. The Proton donor role is filled by Asp197.

It belongs to the PNP/UDP phosphorylase family. MtnN subfamily.

It catalyses the reaction S-adenosyl-L-homocysteine + H2O = S-(5-deoxy-D-ribos-5-yl)-L-homocysteine + adenine. The catalysed reaction is S-methyl-5'-thioadenosine + H2O = 5-(methylsulfanyl)-D-ribose + adenine. It carries out the reaction 5'-deoxyadenosine + H2O = 5-deoxy-D-ribose + adenine. It participates in amino-acid biosynthesis; L-methionine biosynthesis via salvage pathway; S-methyl-5-thio-alpha-D-ribose 1-phosphate from S-methyl-5'-thioadenosine (hydrolase route): step 1/2. Catalyzes the irreversible cleavage of the glycosidic bond in both 5'-methylthioadenosine (MTA) and S-adenosylhomocysteine (SAH/AdoHcy) to adenine and the corresponding thioribose, 5'-methylthioribose and S-ribosylhomocysteine, respectively. Also cleaves 5'-deoxyadenosine, a toxic by-product of radical S-adenosylmethionine (SAM) enzymes, into 5-deoxyribose and adenine. The protein is 5'-methylthioadenosine/S-adenosylhomocysteine nucleosidase of Pasteurella multocida (strain Pm70).